A 523-amino-acid polypeptide reads, in one-letter code: Bifunctional purine biosynthesis protein PurH (523 aa).

In terms of domain architecture, MGS-like spans 4–152 (DHIRRPIRRA…KNHPSVAVVT (149 aa)).

It belongs to the PurH family.

The enzyme catalyses (6R)-10-formyltetrahydrofolate + 5-amino-1-(5-phospho-beta-D-ribosyl)imidazole-4-carboxamide = 5-formamido-1-(5-phospho-D-ribosyl)imidazole-4-carboxamide + (6S)-5,6,7,8-tetrahydrofolate. It carries out the reaction IMP + H2O = 5-formamido-1-(5-phospho-D-ribosyl)imidazole-4-carboxamide. It participates in purine metabolism; IMP biosynthesis via de novo pathway; 5-formamido-1-(5-phospho-D-ribosyl)imidazole-4-carboxamide from 5-amino-1-(5-phospho-D-ribosyl)imidazole-4-carboxamide (10-formyl THF route): step 1/1. The protein operates within purine metabolism; IMP biosynthesis via de novo pathway; IMP from 5-formamido-1-(5-phospho-D-ribosyl)imidazole-4-carboxamide: step 1/1. This is Bifunctional purine biosynthesis protein PurH from Mycobacterium marinum (strain ATCC BAA-535 / M).